The following is a 492-amino-acid chain: NADH-quinone oxidoreductase subunit N 2 (492 aa).

Transmembrane regions (helical) follow at residues 16-36, 44-64, 87-107, 118-138, 140-160, 175-195, 216-236, 250-270, 282-302, 309-329, 333-353, 381-401, 416-438, and 455-475; these read ILPE…DALI, PLGY…ACQA, FSLF…LVSF, GEYY…TSAT, LVLI…LAAM, FLLG…IFGA, PIIY…VAAA, PSPI…AVLL, FWIV…GALV, LLAY…AAAK, ISAA…AFAV, AAIL…GGFF, VWLT…RIIV, and PFGL…LGVL.

Belongs to the complex I subunit 2 family. NDH-1 is composed of 14 different subunits. Subunits NuoA, H, J, K, L, M, N constitute the membrane sector of the complex.

Its subcellular location is the cell inner membrane. It catalyses the reaction a quinone + NADH + 5 H(+)(in) = a quinol + NAD(+) + 4 H(+)(out). Its function is as follows. NDH-1 shuttles electrons from NADH, via FMN and iron-sulfur (Fe-S) centers, to quinones in the respiratory chain. The immediate electron acceptor for the enzyme in this species is believed to be ubiquinone. Couples the redox reaction to proton translocation (for every two electrons transferred, four hydrogen ions are translocated across the cytoplasmic membrane), and thus conserves the redox energy in a proton gradient. This Koribacter versatilis (strain Ellin345) protein is NADH-quinone oxidoreductase subunit N 2.